Here is a 72-residue protein sequence, read N- to C-terminus: Translation initiation factor IF-1 2 (72 aa).

The S1-like domain maps to 1–72 (MAKEDVIEMQ…TKGRIVFRTK (72 aa)).

It belongs to the IF-1 family. As to quaternary structure, component of the 30S ribosomal translation pre-initiation complex which assembles on the 30S ribosome in the order IF-2 and IF-3, IF-1 and N-formylmethionyl-tRNA(fMet); mRNA recruitment can occur at any time during PIC assembly.

The protein localises to the cytoplasm. Functionally, one of the essential components for the initiation of protein synthesis. Stabilizes the binding of IF-2 and IF-3 on the 30S subunit to which N-formylmethionyl-tRNA(fMet) subsequently binds. Helps modulate mRNA selection, yielding the 30S pre-initiation complex (PIC). Upon addition of the 50S ribosomal subunit IF-1, IF-2 and IF-3 are released leaving the mature 70S translation initiation complex. This chain is Translation initiation factor IF-1 2, found in Azoarcus sp. (strain BH72).